The sequence spans 157 residues: MENTHSMISFKTLNKLKIQQLFSIKNKSFYSTSSPISSTVNSSGNDNIDIENDKEIKKKNRLIVKDLYKQLMYLGRVGFLGVDYIRDKAKPQFISNANLTDNNKINECIERTKYVIKEIEAMNRFHKYRNLKKSYDLEFQKVNDNFLNLDNDQNKIK.

It belongs to the complex I LYR family.

It is found in the mitochondrion. The sequence is that of Electron transfer flavoprotein regulatory factor 1 homolog from Dictyostelium discoideum (Social amoeba).